A 63-amino-acid polypeptide reads, in one-letter code: Protein BP4A (63 aa).

Pollen specific.

This Brassica napus (Rape) protein is Protein BP4A (BP4A).